Consider the following 1238-residue polypeptide: ATP-dependent helicase/nuclease subunit A (1238 aa).

A UvrD-like helicase ATP-binding domain is found at 12–490 (VSWTDDQWKA…IDLNANFRSR (479 aa)). Residue 33–40 (AAAGSGKT) participates in ATP binding. The UvrD-like helicase C-terminal domain occupies 510–818 (GEILYDDNAS…RLVTIHSSKG (309 aa)).

It belongs to the helicase family. AddA subfamily. Heterodimer of AddA and AddB/RexB. Requires Mg(2+) as cofactor.

It carries out the reaction Couples ATP hydrolysis with the unwinding of duplex DNA by translocating in the 3'-5' direction.. It catalyses the reaction ATP + H2O = ADP + phosphate + H(+). Its function is as follows. The heterodimer acts as both an ATP-dependent DNA helicase and an ATP-dependent, dual-direction single-stranded exonuclease. Recognizes the chi site generating a DNA molecule suitable for the initiation of homologous recombination. The AddA nuclease domain is required for chi fragment generation; this subunit has the helicase and 3' -&gt; 5' nuclease activities. The protein is ATP-dependent helicase/nuclease subunit A of Lysinibacillus sphaericus (strain C3-41).